Reading from the N-terminus, the 263-residue chain is Endonuclease 8 (263 aa).

Pro-2 (schiff-base intermediate with DNA) is an active-site residue. Glu-3 (proton donor) is an active-site residue. Lys-53 functions as the Proton donor; for beta-elimination activity in the catalytic mechanism. Residues Gln-70, Arg-125, and Asn-169 each contribute to the DNA site. The segment at 229-263 adopts an FPG-type zinc-finger fold; sequence KVFHREGESCERCGGTIERTMLSSRPFYWCPHCQS. Arg-253 (proton donor; for delta-elimination activity) is an active-site residue.

The protein belongs to the FPG family. It depends on Zn(2+) as a cofactor.

The enzyme catalyses 2'-deoxyribonucleotide-(2'-deoxyribose 5'-phosphate)-2'-deoxyribonucleotide-DNA = a 3'-end 2'-deoxyribonucleotide-(2,3-dehydro-2,3-deoxyribose 5'-phosphate)-DNA + a 5'-end 5'-phospho-2'-deoxyribonucleoside-DNA + H(+). Its function is as follows. Involved in base excision repair of DNA damaged by oxidation or by mutagenic agents. Acts as a DNA glycosylase that recognizes and removes damaged bases. Has a preference for oxidized pyrimidines, such as thymine glycol, 5,6-dihydrouracil and 5,6-dihydrothymine. Has AP (apurinic/apyrimidinic) lyase activity and introduces nicks in the DNA strand. Cleaves the DNA backbone by beta-delta elimination to generate a single-strand break at the site of the removed base with both 3'- and 5'-phosphates. This Pectobacterium atrosepticum (strain SCRI 1043 / ATCC BAA-672) (Erwinia carotovora subsp. atroseptica) protein is Endonuclease 8.